Reading from the N-terminus, the 653-residue chain is Fructose-1,6-bisphosphatase class 3 (653 aa).

Belongs to the FBPase class 3 family. Mn(2+) serves as cofactor.

It carries out the reaction beta-D-fructose 1,6-bisphosphate + H2O = beta-D-fructose 6-phosphate + phosphate. Its pathway is carbohydrate biosynthesis; gluconeogenesis. This Listeria monocytogenes serotype 4b (strain CLIP80459) protein is Fructose-1,6-bisphosphatase class 3.